We begin with the raw amino-acid sequence, 358 residues long: MSNIQENENKETCNIKENENKEILKENFKNKEKQYFSSLRSPYSACRSVDCFKKLYTINEGAFGVVYCAQDKETEEIVALKKIKMEREREGIPITSVREIKVLMELKHDNIVQIKEIVLGKNINSIFMAMEFIDHDLRGLMEVIKKPFLPSEIKTLIQQLLNGVSYMHDNWVIHRDLKTANLLYTNKGVLKIADFGLAREYGSPLKPLSKGVVTLWYRAPELLLDTEIYTPAIDIWSVGCIFAEIISKEVLLQGSSEIDQMDKIFKLFGTPTEKSWPAFFKLPLAKYFNLTDQPYNNLKSKFPHITDNAFDLLNKLLELNPEARISASDALKHPYFFENPQPRDPLLMPTWPSSHKKT.

The 285-residue stretch at 52–336 (FKKLYTINEG…ASDALKHPYF (285 aa)) folds into the Protein kinase domain. Residues 58–66 (INEGAFGVV) and Lys-81 contribute to the ATP site. Asp-176 (proton acceptor) is an active-site residue.

It belongs to the protein kinase superfamily. CMGC Ser/Thr protein kinase family. CDC2/CDKX subfamily.

The enzyme catalyses L-seryl-[protein] + ATP = O-phospho-L-seryl-[protein] + ADP + H(+). The catalysed reaction is L-threonyl-[protein] + ATP = O-phospho-L-threonyl-[protein] + ADP + H(+). In Dictyostelium discoideum (Social amoeba), this protein is Cyclin-dependent kinase 11 (cdk11).